We begin with the raw amino-acid sequence, 67 residues long: DNA-directed RNA polymerase subunit omega (67 aa).

The protein belongs to the RNA polymerase subunit omega family. As to quaternary structure, the RNAP catalytic core consists of 2 alpha, 1 beta, 1 beta' and 1 omega subunit. When a sigma factor is associated with the core the holoenzyme is formed, which can initiate transcription.

The catalysed reaction is RNA(n) + a ribonucleoside 5'-triphosphate = RNA(n+1) + diphosphate. Its function is as follows. Promotes RNA polymerase assembly. Latches the N- and C-terminal regions of the beta' subunit thereby facilitating its interaction with the beta and alpha subunits. This is DNA-directed RNA polymerase subunit omega from Nitrosomonas eutropha (strain DSM 101675 / C91 / Nm57).